We begin with the raw amino-acid sequence, 272 residues long: Shikimate dehydrogenase (NADP(+)) (272 aa).

Shikimate is bound by residues 14–16 (SKS) and Thr61. Lys65 functions as the Proton acceptor in the catalytic mechanism. Glu77 is an NADP(+) binding site. 2 residues coordinate shikimate: Asn86 and Asp102. NADP(+)-binding positions include 126–130 (GAGGA), 149–154 (NRTVSR), and Met213. Shikimate is bound at residue Tyr215. Gly237 contacts NADP(+).

It belongs to the shikimate dehydrogenase family. As to quaternary structure, homodimer.

The enzyme catalyses shikimate + NADP(+) = 3-dehydroshikimate + NADPH + H(+). The protein operates within metabolic intermediate biosynthesis; chorismate biosynthesis; chorismate from D-erythrose 4-phosphate and phosphoenolpyruvate: step 4/7. In terms of biological role, involved in the biosynthesis of the chorismate, which leads to the biosynthesis of aromatic amino acids. Catalyzes the reversible NADPH linked reduction of 3-dehydroshikimate (DHSA) to yield shikimate (SA). This chain is Shikimate dehydrogenase (NADP(+)), found in Escherichia coli O45:K1 (strain S88 / ExPEC).